Here is a 297-residue protein sequence, read N- to C-terminus: UDP-N-acetylglucosamine transporter TMEM241 (297 aa).

10 helical membrane passes run 7–29 (LLGLTFCTCYLASHLTNKYVLSV), 32–52 (FTYPTLFQGWQTFIGGLLLHM), 69–89 (VLIWLPASALFVGIIYAGSKA), 93–113 (LAVPVFFILHNVAEVLTCGYQ), 121–141 (TSLSKICSALFLLAAAGCLPF), 146–166 (FDPDGYFWALIHIFCVGSYKI), 187–207 (IFSMVLLAFASHPTGDLFGAL), 211–231 (FLYFYRFHGSCCASGVLGFFL), 250–270 (WILCAKVVTAGLSMLLFDMAL), and 271–291 (TKATVGCFLLGGLGEALLVFS).

It belongs to the nucleotide-sugar transporter family. SLC35A subfamily. In terms of tissue distribution, widely expressed with high expression in lung.

It is found in the golgi apparatus. Its subcellular location is the cis-Golgi network membrane. Golgi-localized UDP-N-acetylglucosamine (UDP-GlcNAc) transporter that transports UDP-N-acetylglucosamine into Golgi lumen. Contributes to lysosomal targeting of NPC2, a key protein required for lysosomal cholesterol exiting, and that utilizes the mannose-6-phosphate (M6P) modification pathway for its lysosomal targeting. The polypeptide is UDP-N-acetylglucosamine transporter TMEM241 (Tmem241) (Mus musculus (Mouse)).